Reading from the N-terminus, the 56-residue chain is PI-stichotoxin-Hcr2m (56 aa).

The BPTI/Kunitz inhibitor domain occupies 4–54 (CLEPKVVGPCTAYLRRFYFDSETGKCTPFIYGGCEGNGNNFETLRACRAIC). Intrachain disulfides connect Cys4–Cys54, Cys13–Cys37, and Cys29–Cys50.

It belongs to the venom Kunitz-type family. Sea anemone type 2 potassium channel toxin subfamily.

It is found in the secreted. The protein localises to the nematocyst. In terms of biological role, this recombinant serine protease inhibitor inhibits trypsin (Ki=210 nM). In contrast to other sea anemone serine protease inhibitors, it does not significantly blocks histamine influence on intracellular calcium concentration in murine bone marrow-derived macrophages (tested at 1 and 10 uM). In vitro, it shows cytoprotective activity in the oxidative stress agent 6-hydroxydopamine (6-OHDA)-induced neurotoxicity model. In this model, it decreases reactive oxygen species (ROS) levels, and increases cell viability in a correlated manner. It is possible that the observed effect is due to the ability of this peptides to act as free-radical scavenger. In vivo, it shows analgesic activity, since it increases hot plate and tail flick withdrawal latencies, when using a mice thermal pain stimulation model. This Radianthus crispa (Leathery sea anemone) protein is PI-stichotoxin-Hcr2m.